The chain runs to 181 residues: Regulator of G-protein signaling 5 (181 aa).

Residues Ser64–Ile180 form the RGS domain.

The protein resides in the cytoplasm. The protein localises to the membrane. Inhibits signal transduction by increasing the GTPase activity of G protein alpha subunits thereby driving them into their inactive GDP-bound form. Binds to G(i)-alpha and G(o)-alpha, but not to G(s)-alpha. This is Regulator of G-protein signaling 5 (RGS5) from Bos taurus (Bovine).